The primary structure comprises 262 residues: Carboxy-S-adenosyl-L-methionine synthase (262 aa).

S-adenosyl-L-methionine is bound by residues tyrosine 50, 84–86 (GCS), 137–138 (DI), asparagine 152, and arginine 219.

This sequence belongs to the class I-like SAM-binding methyltransferase superfamily. Cx-SAM synthase family. In terms of assembly, homodimer.

It catalyses the reaction prephenate + S-adenosyl-L-methionine = carboxy-S-adenosyl-L-methionine + 3-phenylpyruvate + H2O. Functionally, catalyzes the conversion of S-adenosyl-L-methionine (SAM) to carboxy-S-adenosyl-L-methionine (Cx-SAM). The sequence is that of Carboxy-S-adenosyl-L-methionine synthase from Psychrobacter arcticus (strain DSM 17307 / VKM B-2377 / 273-4).